The primary structure comprises 360 residues: Phosphoserine aminotransferase (360 aa).

Arg41 lines the L-glutamate pocket. 4 residues coordinate pyridoxal 5'-phosphate: Trp101, Thr152, Asp172, and Gln195. The residue at position 196 (Lys196) is an N6-(pyridoxal phosphate)lysine. 237 to 238 (NT) lines the pyridoxal 5'-phosphate pocket.

This sequence belongs to the class-V pyridoxal-phosphate-dependent aminotransferase family. SerC subfamily. As to quaternary structure, homodimer. Pyridoxal 5'-phosphate serves as cofactor.

The protein resides in the cytoplasm. The catalysed reaction is O-phospho-L-serine + 2-oxoglutarate = 3-phosphooxypyruvate + L-glutamate. It catalyses the reaction 4-(phosphooxy)-L-threonine + 2-oxoglutarate = (R)-3-hydroxy-2-oxo-4-phosphooxybutanoate + L-glutamate. The protein operates within amino-acid biosynthesis; L-serine biosynthesis; L-serine from 3-phospho-D-glycerate: step 2/3. It participates in cofactor biosynthesis; pyridoxine 5'-phosphate biosynthesis; pyridoxine 5'-phosphate from D-erythrose 4-phosphate: step 3/5. Catalyzes the reversible conversion of 3-phosphohydroxypyruvate to phosphoserine and of 3-hydroxy-2-oxo-4-phosphonooxybutanoate to phosphohydroxythreonine. This Paraburkholderia phytofirmans (strain DSM 17436 / LMG 22146 / PsJN) (Burkholderia phytofirmans) protein is Phosphoserine aminotransferase.